The chain runs to 243 residues: Small ribosomal subunit protein eS4 (243 aa).

Residues 43–105 (IPLLYIVRDY…TGEHYRVLPN (63 aa)) form the S4 RNA-binding domain.

The protein belongs to the eukaryotic ribosomal protein eS4 family.

The chain is Small ribosomal subunit protein eS4 (rps4e) from Pyrococcus abyssi (strain GE5 / Orsay).